The primary structure comprises 629 residues: Keratin, type II cytoskeletal 3 (629 aa).

The head stretch occupies residues 1–182 (MNRQVCKTSG…DPQIGQVRAQ (182 aa)). Residues S13 and S62 each carry the phosphoserine modification. A coil 1A region spans residues 183-218 (EREQIKTLNNKFASFIDKVRFLEQQNKVLETKWELL). The IF rod domain occupies 183–498 (EREQIKTLNN…KLLEGEESRM (316 aa)). A linker 1 region spans residues 219 to 239 (QRQGPNSVTGTNNLEPLFENR). The tract at residues 240–331 (INYLRSYLDS…TLYDAELSQM (92 aa)) is coil 1B. K281 bears the N6,N6-dimethyllysine mark. The linker 12 stretch occupies residues 332-355 (QSHVSDMSVVLSMDNNRSLDLDSI). Position 349 is a phosphoserine (S349). Residues 356 to 494 (IAEVRAQYED…ATYRKLLEGE (139 aa)) are coil 2. The tail stretch occupies residues 495–629 (ESRMSGECQS…FSQSSQRYSR (135 aa)). The disordered stretch occupies residues 603 to 629 (SGGGFSSGSSSRGSSVKFSQSSQRYSR). The segment covering 618-629 (VKFSQSSQRYSR) has biased composition (polar residues).

This sequence belongs to the intermediate filament family. Heterotetramer of two type I and two type II keratins. Keratin-3 associates with keratin-12. In terms of tissue distribution, cornea specific. Expressed in the basal cells of corneal epithelium and stroma. Also expressed in esophageal epithelium.

The polypeptide is Keratin, type II cytoskeletal 3 (KRT3) (Oryctolagus cuniculus (Rabbit)).